A 139-amino-acid polypeptide reads, in one-letter code: VLTLEKPSKFAPIKLPKADGSDIFPRVWSKVMGWGVTSYPNGKPSNELQSVDVRVWGDNACENKLGVDKSSLCAGGEAGKDSCVGDTGDPLIKENGRGDADDILLGLSGWGTGCGDKDMPSVYSRVSAGIEWINSVIKK.

The region spanning 1–138 is the Peptidase S1 domain; sequence VLTLEKPSKF…GIEWINSVIK (138 aa). 2 disulfide bridges follow: Cys61–Cys73 and Cys83–Cys114.

It belongs to the peptidase S1 family.

It is found in the secreted. Functionally, secreted effector that suppresses host plant glucan elicitor-mediated defense responses. Targets host endoglucanases and inhibits the endoglucanase-mediated release of elicitor-active glucan oligosaccharides from P.sojae cell walls. The polypeptide is Glucanase inhibitor protein 3 (Phytophthora sojae (Soybean stem and root rot agent)).